The primary structure comprises 20 residues: Cytochrome c oxidase subunit 8B, mitochondrial (20 aa).

The tract at residues 1–20 (LSGKPAKXHLSVGEQAIAMT) is disordered.

Belongs to the cytochrome c oxidase VIII family. In terms of assembly, component of the cytochrome c oxidase (complex IV, CIV), a multisubunit enzyme composed of 14 subunits. The complex is composed of a catalytic core of 3 subunits MT-CO1, MT-CO2 and MT-CO3, encoded in the mitochondrial DNA, and 11 supernumerary subunits COX4I, COX5A, COX5B, COX6A, COX6B, COX6C, COX7A, COX7B, COX7C, COX8 and NDUFA4, which are encoded in the nuclear genome. The complex exists as a monomer or a dimer and forms supercomplexes (SCs) in the inner mitochondrial membrane with NADH-ubiquinone oxidoreductase (complex I, CI) and ubiquinol-cytochrome c oxidoreductase (cytochrome b-c1 complex, complex III, CIII), resulting in different assemblies (supercomplex SCI(1)III(2)IV(1) and megacomplex MCI(2)III(2)IV(2)).

The protein resides in the mitochondrion inner membrane. It functions in the pathway energy metabolism; oxidative phosphorylation. In terms of biological role, component of the cytochrome c oxidase, the last enzyme in the mitochondrial electron transport chain which drives oxidative phosphorylation. The respiratory chain contains 3 multisubunit complexes succinate dehydrogenase (complex II, CII), ubiquinol-cytochrome c oxidoreductase (cytochrome b-c1 complex, complex III, CIII) and cytochrome c oxidase (complex IV, CIV), that cooperate to transfer electrons derived from NADH and succinate to molecular oxygen, creating an electrochemical gradient over the inner membrane that drives transmembrane transport and the ATP synthase. Cytochrome c oxidase is the component of the respiratory chain that catalyzes the reduction of oxygen to water. Electrons originating from reduced cytochrome c in the intermembrane space (IMS) are transferred via the dinuclear copper A center (CU(A)) of subunit 2 and heme A of subunit 1 to the active site in subunit 1, a binuclear center (BNC) formed by heme A3 and copper B (CU(B)). The BNC reduces molecular oxygen to 2 water molecules using 4 electrons from cytochrome c in the IMS and 4 protons from the mitochondrial matrix. This chain is Cytochrome c oxidase subunit 8B, mitochondrial, found in Oncorhynchus mykiss (Rainbow trout).